We begin with the raw amino-acid sequence, 302 residues long: Oxygen-dependent coproporphyrinogen-III oxidase (302 aa).

Serine 94 contributes to the substrate binding site. A divalent metal cation is bound by residues histidine 98 and histidine 108. Histidine 108 serves as the catalytic Proton donor. Asparagine 110–arginine 112 contacts substrate. Residues histidine 147 and histidine 177 each contribute to the a divalent metal cation site. Residues tyrosine 242 to glutamine 277 form an important for dimerization region. Substrate is bound at residue glycine 260–arginine 262.

Belongs to the aerobic coproporphyrinogen-III oxidase family. As to quaternary structure, homodimer. It depends on a divalent metal cation as a cofactor.

It localises to the cytoplasm. The catalysed reaction is coproporphyrinogen III + O2 + 2 H(+) = protoporphyrinogen IX + 2 CO2 + 2 H2O. It functions in the pathway porphyrin-containing compound metabolism; protoporphyrin-IX biosynthesis; protoporphyrinogen-IX from coproporphyrinogen-III (O2 route): step 1/1. Functionally, involved in the heme biosynthesis. Catalyzes the aerobic oxidative decarboxylation of propionate groups of rings A and B of coproporphyrinogen-III to yield the vinyl groups in protoporphyrinogen-IX. The sequence is that of Oxygen-dependent coproporphyrinogen-III oxidase from Shewanella sp. (strain MR-4).